The chain runs to 294 residues: 4-hydroxy-tetrahydrodipicolinate synthase (294 aa).

Residue threonine 47 participates in pyruvate binding. Tyrosine 136 (proton donor/acceptor) is an active-site residue. Residue lysine 164 is the Schiff-base intermediate with substrate of the active site. Pyruvate is bound at residue valine 206.

Belongs to the DapA family. Homotetramer; dimer of dimers.

The protein localises to the cytoplasm. The catalysed reaction is L-aspartate 4-semialdehyde + pyruvate = (2S,4S)-4-hydroxy-2,3,4,5-tetrahydrodipicolinate + H2O + H(+). The protein operates within amino-acid biosynthesis; L-lysine biosynthesis via DAP pathway; (S)-tetrahydrodipicolinate from L-aspartate: step 3/4. Catalyzes the condensation of (S)-aspartate-beta-semialdehyde [(S)-ASA] and pyruvate to 4-hydroxy-tetrahydrodipicolinate (HTPA). This is 4-hydroxy-tetrahydrodipicolinate synthase from Acaryochloris marina (strain MBIC 11017).